A 283-amino-acid chain; its full sequence is Phosphatidylglycerol--prolipoprotein diacylglyceryl transferase (283 aa).

7 helical membrane-spanning segments follow: residues 21 to 41 (LAVR…LWLA), 60 to 80 (LLFA…VLFY), 95 to 115 (VWTG…AMLW), 124 to 144 (FFTI…AGRL), 176 to 196 (SQLY…NWFI), 203 to 223 (GAVS…VEYV), and 239 to 259 (MGQI…LWAF). A 1,2-diacyl-sn-glycero-3-phospho-(1'-sn-glycerol) is bound at residue arginine 143.

Belongs to the Lgt family.

It is found in the cell inner membrane. It carries out the reaction L-cysteinyl-[prolipoprotein] + a 1,2-diacyl-sn-glycero-3-phospho-(1'-sn-glycerol) = an S-1,2-diacyl-sn-glyceryl-L-cysteinyl-[prolipoprotein] + sn-glycerol 1-phosphate + H(+). Its pathway is protein modification; lipoprotein biosynthesis (diacylglyceryl transfer). Its function is as follows. Catalyzes the transfer of the diacylglyceryl group from phosphatidylglycerol to the sulfhydryl group of the N-terminal cysteine of a prolipoprotein, the first step in the formation of mature lipoproteins. The protein is Phosphatidylglycerol--prolipoprotein diacylglyceryl transferase of Aliivibrio fischeri (strain MJ11) (Vibrio fischeri).